Here is a 576-residue protein sequence, read N- to C-terminus: Tudor and KH domain-containing protein homolog (576 aa).

Residues 40-60 (EEADSGGQRPASGIRGQTEEQ) form a disordered region. KH domains lie at 65–127 (EVCL…RALL) and 136–199 (VVKV…RKML). The segment covering 209 to 224 (LVRSMEEVEQRREPRR) has biased composition (basic and acidic residues). Residues 209–253 (LVRSMEEVEQRREPRRSPTNSIASSMYSSQTSLSSHTQPRDKLMA) form a disordered region. Residues 232–243 (SSMYSSQTSLSS) show a composition bias toward low complexity. Positions 310–375 (APYVGQIVAA…CELRTDFLTL (66 aa)) constitute a Tudor domain. The tract at residues 556-576 (ATDLENGNNNNASTTNGASAH) is disordered. Residues 561–576 (NGNNNNASTTNGASAH) show a composition bias toward low complexity.

The protein belongs to the Tdrkh family. In terms of assembly, interacts (via C-terminus) with AGO3 (via the N-terminal region when symmetrically methylated on arginine residues); this interaction is RNA-independent and may be required for AGO3 localization to the nuage. Interacts (via Tudor domain) with piwi (via N-terminus). Interacts with tral and me31B. In terms of tissue distribution, ovaries (at protein level). Expressed in the ovary and testis.

The protein localises to the cytoplasm. It is found in the nucleus. Its subcellular location is the cytoplasmic ribonucleoprotein granule. In terms of biological role, involved in the piwi-interacting RNA (piRNA) metabolic process, which mediates the repression of transposable elements during meiosis by forming complexes composed of piRNAs and Piwi proteins, and governs the methylation and subsequent repression of transposons which is essential for germline integrity. Likely to act by recruiting Piwi proteins such as AGO3 and piwi to the piRNA biogenesis machinery in the nuage. Required for the final steps of primary piRNA biogenesis by participating in the 3' end-trimming of piwi-bound intermediates into mature piRNAs. The polypeptide is Tudor and KH domain-containing protein homolog (Drosophila melanogaster (Fruit fly)).